We begin with the raw amino-acid sequence, 387 residues long: Carboxynorspermidine/carboxyspermidine decarboxylase (387 aa).

Residue Lys-51 is modified to N6-(pyridoxal phosphate)lysine. Substrate-binding residues include Glu-248 and Asp-284.

It belongs to the Orn/Lys/Arg decarboxylase class-II family. NspC subfamily. As to quaternary structure, homodimer. Pyridoxal 5'-phosphate serves as cofactor.

It is found in the cytoplasm. It catalyses the reaction carboxynorspermidine + H(+) = norspermidine + CO2. It carries out the reaction carboxyspermidine + H(+) = spermidine + CO2. In terms of biological role, catalyzes the decarboxylation of carboxynorspermidine and carboxyspermidine. Essential for biofilm formation. In Vibrio cholerae serotype O1 (strain ATCC 39315 / El Tor Inaba N16961), this protein is Carboxynorspermidine/carboxyspermidine decarboxylase.